The sequence spans 537 residues: MGCGLLAAGLLLFTWLPAGCLSLLVTVQHTERYVTLFASVTLKCDYTTSAQLQDVVVTWRFKSFCKDPIFDYFSASYQAALSLGQDPSNDCSDNQREVRIVAQRRGQSEPVLGVDYRQRKITIQNRADLVINEVMWWDHGVYYCTIEAPGDTSGDPDKEVKLIVLHWLTVIFIILGALLLLLLIGVCWCQCCPQYCCCYIRCPCCPTRCCCPEEALARHRYMKQVQALGPQMMEKPLYWGADRSSQVSSYAMNPLLQRDLSLQSSLPQMPMTQMAAHPPVANGVLEYLEKELRNLNPAQPLPADLRAKSGHPCSMLSSLGSAEVVERRVIHLPPLIRDPPSSRTSNPSHQQRLNAVSSRHCDLSERPRQRHHSDFLRELQDQGMRPWAPGRGELDPHWSGRHHRSRPSESSMPWSDWDSLSECPSSSEAPWPPRRPEPREGAQRRERRRHRSYSPPLPSGPSSWSSEEEKESLPRNWGAQRRHHHRRRRSQSPNWPEEKPPSYRSLDVTPGKNNRKKGNVERRLERESSHSGRSVVI.

The first 22 residues, 1–22 (MGCGLLAAGLLLFTWLPAGCLS), serve as a signal peptide directing secretion. The region spanning 23–161 (LLVTVQHTER…TSGDPDKEVK (139 aa)) is the Ig-like V-type domain. At 23–166 (LLVTVQHTER…DKEVKLIVLH (144 aa)) the chain is on the extracellular side. C44 and C144 form a disulfide bridge. Residues 167-187 (WLTVIFIILGALLLLLLIGVC) form a helical membrane-spanning segment. Residues 188–537 (WCQCCPQYCC…SSHSGRSVVI (350 aa)) lie on the Cytoplasmic side of the membrane. The segment at 333 to 537 (PPLIRDPPSS…SSHSGRSVVI (205 aa)) is disordered. Over residues 341–357 (SSRTSNPSHQQRLNAVS) the composition is skewed to polar residues. Composition is skewed to basic and acidic residues over residues 359–380 (RHCD…RELQ) and 434–444 (RRPEPREGAQR). Residues 480-490 (QRRHHHRRRRS) show a composition bias toward basic residues. 2 positions are modified to phosphoserine: S490 and S492. Residues 518–530 (GNVERRLERESSH) show a composition bias toward basic and acidic residues.

It belongs to the immunoglobulin superfamily. LISCH7 family. Homooligomer. Interacts with MARVELD2 and OCLN; the interaction is required to recruit MARVELD2 to tricellular contacts. Interacts (via C-terminus) with TRA2A, TRA2B and SRSF1. Interacts with PLSCR1. In terms of tissue distribution, expressed in the vestibule and in hair cells and supporting cells of the cochlea. Expressed in epithelial tissues. Highly expressed in colon but also detected in small intestine, bladder and lung. In colon, expressed in the upper portion of the crypts (at protein level). Expressed in CCK secretory cells of the proximal small intestine (at protein level). Expressed in the organ of Corti, stria vascularis, utricle and saccule of the inner ear.

It localises to the cell membrane. Its subcellular location is the cell junction. It is found in the tight junction. The protein localises to the nucleus. The protein resides in the cytoplasm. Functionally, maintains epithelial barrier function by recruiting MARVELD2/tricellulin to tricellular tight junctions (tTJs). Crucial for normal hearing by maintaining the structural and functional integrity of tTJs, which are critical for the survival of auditory neurosensory HCs. Mediates fatty acids and lipoproteins-stimulated CCK/cholecystokinin secretion in the small intestine. In the inner ear, may regulate alternative pre-mRNA splicing via binding to TRA2A, TRA2B and SRSF1. This is Immunoglobulin-like domain-containing receptor 1 from Mus musculus (Mouse).